An 820-amino-acid chain; its full sequence is Leucine--tRNA ligase (820 aa).

Residues 40–51 carry the 'HIGH' region motif; sequence PYPSGAGLHVGH. The short motif at 601–605 is the 'KMSKS' region element; sequence KMSKS. Residue lysine 604 coordinates ATP.

Belongs to the class-I aminoacyl-tRNA synthetase family.

Its subcellular location is the cytoplasm. The catalysed reaction is tRNA(Leu) + L-leucine + ATP = L-leucyl-tRNA(Leu) + AMP + diphosphate. The protein is Leucine--tRNA ligase of Chlamydia caviae (strain ATCC VR-813 / DSM 19441 / 03DC25 / GPIC) (Chlamydophila caviae).